Consider the following 332-residue polypeptide: Beta-ketoacyl-[acyl-carrier-protein] synthase III 5 (332 aa).

Catalysis depends on residues Cys-111 and His-253. The segment at 254–258 is ACP-binding; it reads QANAR. Residue Asn-283 is part of the active site.

It belongs to the thiolase-like superfamily. FabH family. Homodimer.

It is found in the cytoplasm. It catalyses the reaction malonyl-[ACP] + acetyl-CoA + H(+) = 3-oxobutanoyl-[ACP] + CO2 + CoA. It participates in lipid metabolism; fatty acid biosynthesis. Its function is as follows. Catalyzes the condensation reaction of fatty acid synthesis by the addition to an acyl acceptor of two carbons from malonyl-ACP. Catalyzes the first condensation reaction which initiates fatty acid synthesis and may therefore play a role in governing the total rate of fatty acid production. Possesses both acetoacetyl-ACP synthase and acetyl transacylase activities. Its substrate specificity determines the biosynthesis of branched-chain and/or straight-chain of fatty acids. This Streptomyces coelicolor (strain ATCC BAA-471 / A3(2) / M145) protein is Beta-ketoacyl-[acyl-carrier-protein] synthase III 5.